Reading from the N-terminus, the 132-residue chain is Small ribosomal subunit protein uS8 (132 aa).

Belongs to the universal ribosomal protein uS8 family. As to quaternary structure, part of the 30S ribosomal subunit. Contacts proteins S5 and S12.

Functionally, one of the primary rRNA binding proteins, it binds directly to 16S rRNA central domain where it helps coordinate assembly of the platform of the 30S subunit. The polypeptide is Small ribosomal subunit protein uS8 (Rhodospirillum rubrum (strain ATCC 11170 / ATH 1.1.1 / DSM 467 / LMG 4362 / NCIMB 8255 / S1)).